Consider the following 377-residue polypeptide: Guanine nucleotide-binding protein subunit beta-2 (377 aa).

7 WD repeats span residues Gly63 to Asn93, Leu105 to Asn135, Gly154 to Asp185, Gly202 to Asp233, Gly246 to Asp276, Gly293 to Asp323, and Ser339 to Ala369.

It belongs to the WD repeat G protein beta family. In terms of assembly, g proteins are composed of 3 units, alpha, beta and gamma.

Guanine nucleotide-binding proteins (G proteins) are involved as a modulator or transducer in various transmembrane signaling systems. The beta and gamma chains are required for the GTPase activity, for replacement of GDP by GTP, and for G protein-effector interaction. In Nicotiana tabacum (Common tobacco), this protein is Guanine nucleotide-binding protein subunit beta-2.